We begin with the raw amino-acid sequence, 179 residues long: Bifunctional protein PyrR (179 aa).

Substrate is bound by residues 39 to 40, 101 to 109, Arg-134, and Val-158; these read RR and DDVLFTGRT. A PRPP-binding motif is present at residues 97–109; it reads VILIDDVLFTGRT.

The protein belongs to the purine/pyrimidine phosphoribosyltransferase family. PyrR subfamily.

The catalysed reaction is UMP + diphosphate = 5-phospho-alpha-D-ribose 1-diphosphate + uracil. Regulates the transcription of the pyrimidine nucleotide (pyr) operon in response to exogenous pyrimidines. Its function is as follows. Also displays a weak uracil phosphoribosyltransferase activity which is not physiologically significant. The sequence is that of Bifunctional protein PyrR from Haemophilus ducreyi (strain 35000HP / ATCC 700724).